Reading from the N-terminus, the 171-residue chain is Translation initiation factor IF-3 (171 aa).

It belongs to the IF-3 family. In terms of assembly, monomer.

The protein localises to the cytoplasm. In terms of biological role, IF-3 binds to the 30S ribosomal subunit and shifts the equilibrium between 70S ribosomes and their 50S and 30S subunits in favor of the free subunits, thus enhancing the availability of 30S subunits on which protein synthesis initiation begins. The polypeptide is Translation initiation factor IF-3 (Thermus thermophilus (strain ATCC BAA-163 / DSM 7039 / HB27)).